A 166-amino-acid polypeptide reads, in one-letter code: Large ribosomal subunit protein uL10 (166 aa).

The protein belongs to the universal ribosomal protein uL10 family. Part of the ribosomal stalk of the 50S ribosomal subunit. The N-terminus interacts with L11 and the large rRNA to form the base of the stalk. The C-terminus forms an elongated spine to which L12 dimers bind in a sequential fashion forming a multimeric L10(L12)X complex.

Its function is as follows. Forms part of the ribosomal stalk, playing a central role in the interaction of the ribosome with GTP-bound translation factors. The chain is Large ribosomal subunit protein uL10 from Bacillus mycoides (strain KBAB4) (Bacillus weihenstephanensis).